The primary structure comprises 368 residues: Spore germination protein B2 (368 aa).

10 consecutive transmembrane segments (helical) span residues 10–30 (FMQT…LTLP), 43–63 (LMIL…LPFL), 82–102 (FIGF…VCFQ), 120–140 (MAVV…GGVY), 145–165 (VYAY…MFSF), 187–207 (LFPK…LVPF), 217–237 (AVAL…LIVI), 282–302 (FACM…IFHL), 308–328 (AWLL…PKDL), and 338–358 (LGYA…LSWI).

It belongs to the amino acid-polyamine-organocation (APC) superfamily. Spore germination protein (SGP) (TC 2.A.3.9) family.

The protein resides in the cell membrane. Functionally, involved in the response to the germinative mixture of L-asparagine, glucose, fructose and potassium ions (AGFK). Could be an amino acid transporter. Cannot stimulate germination in the absence of gerD and gerK gene products (fructose and glucose receptors, respectively). The sequence is that of Spore germination protein B2 (gerBB) from Bacillus subtilis (strain 168).